We begin with the raw amino-acid sequence, 197 residues long: Probable GTP-binding protein EngB (197 aa).

An EngB-type G domain is found at 26–197 (ELPEIALAGR…EAWDAILEKL (172 aa)). Residues 34-41 (GRSNVGKS), 61-65 (GKTQL), 79-82 (DVPG), 146-149 (TKAD), and 178-180 (FSS) each bind GTP. Residues Ser-41 and Thr-63 each contribute to the Mg(2+) site.

Belongs to the TRAFAC class TrmE-Era-EngA-EngB-Septin-like GTPase superfamily. EngB GTPase family. Requires Mg(2+) as cofactor.

Functionally, necessary for normal cell division and for the maintenance of normal septation. The sequence is that of Probable GTP-binding protein EngB from Streptococcus pneumoniae (strain CGSP14).